We begin with the raw amino-acid sequence, 399 residues long: Zinc finger HIT domain-containing protein 2 (399 aa).

Residue Met1 is modified to N-acetylmethionine. 8 residues coordinate Zn(2+): Cys7, Cys10, Cys22, Cys25, Cys30, Cys34, His38, and Cys41. The HIT-type zinc finger occupies 7 to 41; the sequence is CGFCPAGEALPARYTCPRCNAPYCSLRCYRAHGAC. 2 disordered regions span residues 70–97 and 152–175; these read RLRE…GLSG and AEPE…AEPF. The segment covering 86–96 has biased composition (gly residues); it reads LGPGARPGGLS. Thr161 bears the Phosphothreonine mark.

Interacts (via HIT-type zinc finger) with RUVBL2 in the presence of ATP or ADP; shows a stronger interaction in the presence of ADP. Low expression in most tissues; highly expressed in testis; particularly in seminiferous tubules.

May act as a bridging factor mediating the interaction between the R2TP/Prefoldin-like (R2TP/PFDL) complex and U5 small nuclear ribonucleoprotein (U5 snRNP). Required for the interaction of R2TP complex subunit RPAP3 and prefoldin-like subunit URI1 with U5 snRNP proteins EFTUD2 and PRPF8. May play a role in regulating the composition of the U5 snRNP complex. This Mus musculus (Mouse) protein is Zinc finger HIT domain-containing protein 2 (Znhit2).